A 226-amino-acid chain; its full sequence is Biosynthetic peptidoglycan transglycosylase (226 aa).

A helical membrane pass occupies residues 8-28 (FFGWTWFVMWRFLLLLALLLL).

The protein belongs to the glycosyltransferase 51 family.

Its subcellular location is the cell inner membrane. It catalyses the reaction [GlcNAc-(1-&gt;4)-Mur2Ac(oyl-L-Ala-gamma-D-Glu-L-Lys-D-Ala-D-Ala)](n)-di-trans,octa-cis-undecaprenyl diphosphate + beta-D-GlcNAc-(1-&gt;4)-Mur2Ac(oyl-L-Ala-gamma-D-Glu-L-Lys-D-Ala-D-Ala)-di-trans,octa-cis-undecaprenyl diphosphate = [GlcNAc-(1-&gt;4)-Mur2Ac(oyl-L-Ala-gamma-D-Glu-L-Lys-D-Ala-D-Ala)](n+1)-di-trans,octa-cis-undecaprenyl diphosphate + di-trans,octa-cis-undecaprenyl diphosphate + H(+). The protein operates within cell wall biogenesis; peptidoglycan biosynthesis. Peptidoglycan polymerase that catalyzes glycan chain elongation from lipid-linked precursors. The polypeptide is Biosynthetic peptidoglycan transglycosylase (Shewanella frigidimarina (strain NCIMB 400)).